Consider the following 524-residue polypeptide: Serine/threonine-protein phosphatase 2A 56 kDa regulatory subunit gamma isoform (524 aa).

N-acetylmethionine is present on M1. Residues 472 to 489 carry the Nuclear localization signal motif; sequence RKTVSDEARQAQKDPKKE. The interval 476–524 is disordered; the sequence is SDEARQAQKDPKKERPLARRKSELPQDPHTKKALEAHCRADELVPQDGR.

It belongs to the phosphatase 2A regulatory subunit B56 family. PP2A consists of a common heterodimeric core enzyme, composed of PPP2CA a 36 kDa catalytic subunit (subunit C) and PPP2R1A a 65 kDa constant regulatory subunit (PR65 or subunit A), that associates with a variety of regulatory subunits. Proteins that associate with the core dimer include three families of regulatory subunits B (the R2/B/PR55/B55, R3/B''/PR72/PR130/PR59 and R5/B'/B56 families), the 48 kDa variable regulatory subunit, viral proteins, and cell signaling molecules. Interacts with SGO1. Interacts with SGO1; the interaction is direct. May interact with TP53. Interacts with IER3 and/or ERK kinases; regulates ERK dephosphorylation Interacts with CIP2A; this interaction stabilizes CIP2A. In terms of tissue distribution, highly expressed in testis, heart and spleen. Also found in brain and skeletal muscle.

It is found in the nucleus. Its subcellular location is the chromosome. The protein localises to the centromere. The B regulatory subunit might modulate substrate selectivity and catalytic activity, and might also direct the localization of the catalytic enzyme to a particular subcellular compartment. The PP2A-PPP2R5C holoenzyme may activate TP53 and play a role in DNA damage-induced inhibition of cell proliferation. PP2A-PPP2R5C may also regulate the ERK signaling pathway through ERK dephosphorylation. This Oryctolagus cuniculus (Rabbit) protein is Serine/threonine-protein phosphatase 2A 56 kDa regulatory subunit gamma isoform (PPP2R5C).